The primary structure comprises 496 residues: Lysine--tRNA ligase (496 aa).

Mg(2+) contacts are provided by E408 and E415.

It belongs to the class-II aminoacyl-tRNA synthetase family. In terms of assembly, homodimer. Requires Mg(2+) as cofactor.

The protein resides in the cytoplasm. The catalysed reaction is tRNA(Lys) + L-lysine + ATP = L-lysyl-tRNA(Lys) + AMP + diphosphate. The sequence is that of Lysine--tRNA ligase from Legionella pneumophila (strain Lens).